A 145-amino-acid polypeptide reads, in one-letter code: Large ribosomal subunit protein uL15 (145 aa).

A disordered region spans residues 20 to 39 (GRVGKHRKHPSGRGNAGGEH).

This sequence belongs to the universal ribosomal protein uL15 family.

This Trypanosoma brucei brucei protein is Large ribosomal subunit protein uL15 (RPL27A).